A 339-amino-acid chain; its full sequence is tRNA pseudouridine synthase B (339 aa).

The active-site Nucleophile is Asp40. The 46-residue stretch at Phe262–Ser307 folds into the RPE1 insert domain.

This sequence belongs to the pseudouridine synthase TruB family. Type 1 subfamily.

The catalysed reaction is uridine(55) in tRNA = pseudouridine(55) in tRNA. Its function is as follows. Responsible for synthesis of pseudouridine from uracil-55 in the psi GC loop of transfer RNAs. The protein is tRNA pseudouridine synthase B of Rickettsia felis (strain ATCC VR-1525 / URRWXCal2) (Rickettsia azadi).